Here is a 183-residue protein sequence, read N- to C-terminus: dTTP/UTP pyrophosphatase (183 aa).

The active-site Proton acceptor is the aspartate 64.

Belongs to the Maf family. YhdE subfamily. Requires a divalent metal cation as cofactor.

Its subcellular location is the cytoplasm. It catalyses the reaction dTTP + H2O = dTMP + diphosphate + H(+). The catalysed reaction is UTP + H2O = UMP + diphosphate + H(+). Functionally, nucleoside triphosphate pyrophosphatase that hydrolyzes dTTP and UTP. May have a dual role in cell division arrest and in preventing the incorporation of modified nucleotides into cellular nucleic acids. This chain is dTTP/UTP pyrophosphatase, found in Acinetobacter baylyi (strain ATCC 33305 / BD413 / ADP1).